Reading from the N-terminus, the 159-residue chain is 2-C-methyl-D-erythritol 2,4-cyclodiphosphate synthase (159 aa).

Residues Asp8 and His10 each coordinate a divalent metal cation. 4-CDP-2-C-methyl-D-erythritol 2-phosphate-binding positions include 8–10 (DVH) and 34–35 (HS). His42 lines the a divalent metal cation pocket. 4-CDP-2-C-methyl-D-erythritol 2-phosphate-binding positions include 56 to 58 (DIG), 61 to 65 (FPDTD), 100 to 106 (AQAPKML), 132 to 135 (TTTE), Phe139, and Arg142.

Belongs to the IspF family. In terms of assembly, homotrimer. A divalent metal cation is required as a cofactor.

The enzyme catalyses 4-CDP-2-C-methyl-D-erythritol 2-phosphate = 2-C-methyl-D-erythritol 2,4-cyclic diphosphate + CMP. It participates in isoprenoid biosynthesis; isopentenyl diphosphate biosynthesis via DXP pathway; isopentenyl diphosphate from 1-deoxy-D-xylulose 5-phosphate: step 4/6. In terms of biological role, involved in the biosynthesis of isopentenyl diphosphate (IPP) and dimethylallyl diphosphate (DMAPP), two major building blocks of isoprenoid compounds. Catalyzes the conversion of 4-diphosphocytidyl-2-C-methyl-D-erythritol 2-phosphate (CDP-ME2P) to 2-C-methyl-D-erythritol 2,4-cyclodiphosphate (ME-CPP) with a corresponding release of cytidine 5-monophosphate (CMP). This chain is 2-C-methyl-D-erythritol 2,4-cyclodiphosphate synthase, found in Klebsiella pneumoniae (strain 342).